Reading from the N-terminus, the 332-residue chain is MLLLVLALLAVLFPAGDTQDAFPEPISYYVTQSSSFFNSTWAQNQASGWLGDIQIDGWNSDSGTIIFRKTWSKGNFSNDEILEMEELFRLYFLGFVKEVQELVSDFQLEYPFEIQGIAGCELHSGGAIVSFLMGAIEGLHFMSINNYSCLPAPEGGTRAQKFCALILQYKGICDIVENLLTKVCPRYLMSVLEAGKAALQKHVKPEAWLSQGPSPEPGYLQLVCHVSGFYPKPVWVMWMRGEQEQPETQRGDVLPNPDDTWYLRATLDVVAKEATGLSCRVKHSSLGGQDIILYWGNSSIGWIILAVFVSCLIVLLFYVLWFYKHWSYQDIL.

Positions 1-17 (MLLLVLALLAVLFPAGD) are cleaved as a signal peptide. The Extracellular portion of the chain corresponds to 18–301 (TQDAFPEPIS…ILYWGNSSIG (284 aa)). N-linked (GlcNAc...) asparagine glycosylation is found at Asn-38, Asn-75, and Asn-146. 3 cysteine pairs are disulfide-bonded: Cys-120–Cys-184, Cys-149–Cys-163, and Cys-224–Cys-279. One can recognise an Ig-like domain in the interval 185 to 295 (PRYLMSVLEA…LGGQDIILYW (111 aa)). An N-linked (GlcNAc...) asparagine glycan is attached at Asn-297. The helical transmembrane segment at 302–322 (WIILAVFVSCLIVLLFYVLWF) threads the bilayer. Residues 323–332 (YKHWSYQDIL) are Cytoplasmic-facing. Positions 328-331 (YQDI) match the Internalization signal motif.

As to quaternary structure, heterodimer with B2M (beta-2-microglobulin). Interacts with saposin C.

Its subcellular location is the cell membrane. The protein localises to the endosome membrane. It localises to the lysosome membrane. In terms of biological role, antigen-presenting protein that binds self and non-self lipid and glycolipid antigens and presents them to T-cell receptors on natural killer T-cells. The polypeptide is T-cell surface glycoprotein CD1b2 (CD1B2) (Cavia porcellus (Guinea pig)).